The primary structure comprises 631 residues: NADPH oxidoreductase A (631 aa).

The region spanning 73-212 (ILILYGTEYG…CFDRYIDTVC (140 aa)) is the Flavodoxin-like domain. Residues 79-83 (TEYGL) and 160-191 (VLALGDRSYPHYCAAGKTLDKQFEEMGAKRFR) contribute to the FMN site. The FAD-binding FR-type domain maps to 247-480 (KKPYSSKLLV…INNNPDFRLP (234 aa)). Position 249–299 (249–299 (PYSSKLLVKRVLTKGDKVGIHLEFELGDSELKYVPGDALAILPDNAASEVS)) interacts with FAD. Residue 504–630 (QERKALGHTG…KEKRYQKDVW (127 aa)) participates in NADP(+) binding.

Requires FAD as cofactor. It depends on FMN as a cofactor.

In terms of biological role, probable NADPH oxidoreductase that controls development beyond the mound stage. The protein is NADPH oxidoreductase A (redA) of Dictyostelium discoideum (Social amoeba).